Reading from the N-terminus, the 38-residue chain is Photosystem II reaction center protein L (38 aa).

A helical transmembrane segment spans residues 17–37; the sequence is SLYWGLLLIFVLAVLFSSYIF.

Belongs to the PsbL family. As to quaternary structure, PSII is composed of 1 copy each of membrane proteins PsbA, PsbB, PsbC, PsbD, PsbE, PsbF, PsbH, PsbI, PsbJ, PsbK, PsbL, PsbM, PsbT, PsbY, PsbZ, Psb30/Ycf12, at least 3 peripheral proteins of the oxygen-evolving complex and a large number of cofactors. It forms dimeric complexes.

Its subcellular location is the plastid. It is found in the chloroplast thylakoid membrane. Functionally, one of the components of the core complex of photosystem II (PSII). PSII is a light-driven water:plastoquinone oxidoreductase that uses light energy to abstract electrons from H(2)O, generating O(2) and a proton gradient subsequently used for ATP formation. It consists of a core antenna complex that captures photons, and an electron transfer chain that converts photonic excitation into a charge separation. This subunit is found at the monomer-monomer interface and is required for correct PSII assembly and/or dimerization. This is Photosystem II reaction center protein L from Euglena gracilis.